A 641-amino-acid chain; its full sequence is Macrolide export ATP-binding/permease protein MacB (641 aa).

The ABC transporter domain maps to 2–236; that stretch reads IFLKNICKNI…LTLKTMSKEK (235 aa). 34-41 is a binding site for ATP; it reads GQSGSGKT. Transmembrane regions (helical) follow at residues 265–285, 519–539, 571–591, and 604–624; these read ILTMLGIIIGIASVVCVVALG, ACVAVIALIVGGIGVMNIMLV, MICTIGAILGVILSIFVIFAF, and AYSVLLGLLSSMFIGVVFGFF.

Belongs to the ABC transporter superfamily. Macrolide exporter (TC 3.A.1.122) family. As to quaternary structure, homodimer.

The protein localises to the cell inner membrane. In terms of biological role, non-canonical ABC transporter that contains transmembrane domains (TMD), which form a pore in the inner membrane, and an ATP-binding domain (NBD), which is responsible for energy generation. Confers resistance against macrolides. In Campylobacter jejuni subsp. jejuni serotype O:23/36 (strain 81-176), this protein is Macrolide export ATP-binding/permease protein MacB.